The following is a 337-amino-acid chain: UDP-3-O-acylglucosamine N-acyltransferase (337 aa).

Histidine 238 serves as the catalytic Proton acceptor.

It belongs to the transferase hexapeptide repeat family. LpxD subfamily. As to quaternary structure, homotrimer.

It carries out the reaction a UDP-3-O-[(3R)-3-hydroxyacyl]-alpha-D-glucosamine + a (3R)-hydroxyacyl-[ACP] = a UDP-2-N,3-O-bis[(3R)-3-hydroxyacyl]-alpha-D-glucosamine + holo-[ACP] + H(+). It functions in the pathway bacterial outer membrane biogenesis; LPS lipid A biosynthesis. Catalyzes the N-acylation of UDP-3-O-acylglucosamine using 3-hydroxyacyl-ACP as the acyl donor. Is involved in the biosynthesis of lipid A, a phosphorylated glycolipid that anchors the lipopolysaccharide to the outer membrane of the cell. The sequence is that of UDP-3-O-acylglucosamine N-acyltransferase from Xanthomonas oryzae pv. oryzae (strain KACC10331 / KXO85).